The following is a 322-amino-acid chain: Germ cell-specific gene 1-like protein (322 aa).

The Cytoplasmic portion of the chain corresponds to Met-1–Arg-8. The helical transmembrane segment at Ser-9–Thr-29 threads the bilayer. The Extracellular segment spans residues Ser-30–Gly-125. A helical membrane pass occupies residues Val-126–Leu-146. Topologically, residues Leu-147–Ala-166 are cytoplasmic. The chain crosses the membrane as a helical span at residues Phe-167–Met-187. Topologically, residues Thr-188 to Gly-209 are extracellular. The helical transmembrane segment at Trp-210 to Leu-230 threads the bilayer. Topologically, residues Asn-231 to Cys-322 are cytoplasmic.

This sequence belongs to the GSG1 family. In terms of assembly, component of the AMPAR complex.

The protein resides in the cell membrane. Its subcellular location is the synapse. Its function is as follows. As a component of the AMPAR complex, modifies AMPA receptor (AMPAR) gating. The polypeptide is Germ cell-specific gene 1-like protein (gsg1l) (Xenopus tropicalis (Western clawed frog)).